A 229-amino-acid chain; its full sequence is Transmembrane protein 182 (229 aa).

Residues 1–26 form the signal peptide; that stretch reads MRLNIAIFFGALFGALGVLLFLVAFG. At 27–114 the chain is on the extracellular side; the sequence is SDYWLLATEV…SYDSAVIYRG (88 aa). Residue Asn47 is glycosylated (N-linked (GlcNAc...) asparagine). The interaction with ITGB1 stretch occupies residues 49-59; that stretch reads TFHHEGFFWRC. N-linked (GlcNAc...) asparagine glycosylation is present at Asn102. The helical transmembrane segment at 115–135 threads the bilayer; the sequence is FWAVLMLLGVVAVVIASFLII. Residues 136 to 153 are Cytoplasmic-facing; that stretch reads CAAPFASHFLYKAGGGSY. Residues 154–174 traverse the membrane as a helical segment; the sequence is IAAGILFSLVVMLYVIWVQAV. Residues 175–200 are Extracellular-facing; sequence ADMESYRNMKMKDCLDFTPSVLYGWS. Residues 201–221 traverse the membrane as a helical segment; that stretch reads FFLAPAGIFFSLLAGLLFLVV. Residues 222-229 are Cytoplasmic-facing; the sequence is GWHIQIHH.

It belongs to the TMEM182 family. As to quaternary structure, interacts with ITGB1.

It is found in the cell membrane. In terms of biological role, negatively regulates myogenesis and skeletal muscle regeneration via its association with ITGB1. Modulates ITGB1 activation by decreasing ITGB1-LAMB1 interaction and inhibiting ITGB1-mediated intracellular signaling during myogenesis. In Homo sapiens (Human), this protein is Transmembrane protein 182 (TMEM182).